A 356-amino-acid polypeptide reads, in one-letter code: Fructose-1,6-bisphosphatase class 1 (356 aa).

The interval 1–26 (MAREWPMTHPSNHPMDHHHQTLQAHL) is disordered. Residues E101, D120, L122, and D123 each coordinate Mg(2+). Residues 123-126 (DGSS) and N211 contribute to the substrate site. Mg(2+) is bound at residue E283.

Belongs to the FBPase class 1 family. Homotetramer. Requires Mg(2+) as cofactor.

The protein localises to the cytoplasm. It carries out the reaction beta-D-fructose 1,6-bisphosphate + H2O = beta-D-fructose 6-phosphate + phosphate. It functions in the pathway carbohydrate biosynthesis; Calvin cycle. This chain is Fructose-1,6-bisphosphatase class 1, found in Bradyrhizobium sp. (strain ORS 278).